The primary structure comprises 42 residues: Daisho1 (42 aa).

An N-terminal signal peptide occupies residues 1–20; sequence MKFFQAAALLLAMFAALANA. A propeptide spans 21–26 (removed by a dipeptidylpeptidase); it reads EPVPQP. T41 is modified (threonine amide).

In terms of tissue distribution, hemolymph (at protein level).

The protein localises to the secreted. In terms of biological role, peptide which plays a role in the humoral immune response to a subset of filamentous fungi, including F.oxysporum and F.verticillioides. The polypeptide is Daisho1 (Drosophila melanogaster (Fruit fly)).